Reading from the N-terminus, the 183-residue chain is Histone deacetylase complex subunit SAP30L (183 aa).

Methionine 1 is subject to N-acetylmethionine. Over residues 1–10 the composition is skewed to acidic residues; the sequence is MNGFSTEEDS. The interval 1–23 is disordered; it reads MNGFSTEEDSREGPPAAPAAAAP. 2 disulfides stabilise this stretch: cysteine 29/cysteine 30 and cysteine 38/cysteine 74. The segment at 29-77 adopts an Atypical zinc-finger fold; the sequence is CCLIEDGERCVRPAGNASFSKRVQKSISQKKLKLDIDKSVRHLYICDFH. Lysine 49 is covalently cross-linked (Glycyl lysine isopeptide (Lys-Gly) (interchain with G-Cter in SUMO2)). Residues 85–105 form a disordered region; sequence RNKRKRKTSDDGGDSPEHDTD. Residues 86–91 carry the Nuclear localization signal (NLS) motif; the sequence is NKRKRK. Positions 88 to 90 are important for DNA and phosphoinositide binding; sequence RKR. Threonine 92 carries the phosphothreonine modification. Residues serine 93 and serine 99 each carry the phosphoserine modification. Residue threonine 104 is modified to Phosphothreonine. Residues lysine 155, lysine 166, and lysine 175 each participate in a glycyl lysine isopeptide (Lys-Gly) (interchain with G-Cter in SUMO2) cross-link.

This sequence belongs to the SAP30 family. As to quaternary structure, interacts with components of the histone deacetylase complex SIN3A, HDAC1 and HDAC2. Binds histones and nucleosomes. Interacts with FEZ1. In terms of tissue distribution, detected in brain and ovary, and at lower levels in heart, small intestine, lung, kidney, skeletal muscle, stomach and spleen (at protein level). Ubiquitous; expressed in all tissues tested with highest levels in testis.

It localises to the nucleus. The protein resides in the nucleolus. Functionally, functions as a transcription repressor, probably via its interaction with histone deacetylase complexes. Involved in the functional recruitment of the class 1 Sin3-histone deacetylase complex (HDAC) to the nucleolus. Binds DNA, apparently without sequence-specificity, and bends bound double-stranded DNA. Binds phosphoinositol phosphates (phosphoinositol 3-phosphate, phosphoinositol 4-phosphate and phosphoinositol 5-phosphate) via the same basic sequence motif that mediates DNA binding and nuclear import. Its function is as follows. Functions as a transcription repressor; isoform 2 has lower transcription repressor activity than isoform 1 and isoform 3. In terms of biological role, functions as a transcription repressor; its activity is marginally lower than that of isoform 1. This chain is Histone deacetylase complex subunit SAP30L (SAP30L), found in Homo sapiens (Human).